A 185-amino-acid polypeptide reads, in one-letter code: Threonylcarbamoyl-AMP synthase (185 aa).

One can recognise a YrdC-like domain in the interval 4-185; sequence SWRVQQAARE…LATGKVVRPS (182 aa).

The protein belongs to the SUA5 family. TsaC subfamily.

It localises to the cytoplasm. The catalysed reaction is L-threonine + hydrogencarbonate + ATP = L-threonylcarbamoyladenylate + diphosphate + H2O. Required for the formation of a threonylcarbamoyl group on adenosine at position 37 (t(6)A37) in tRNAs that read codons beginning with adenine. Catalyzes the conversion of L-threonine, HCO(3)(-)/CO(2) and ATP to give threonylcarbamoyl-AMP (TC-AMP) as the acyladenylate intermediate, with the release of diphosphate. The polypeptide is Threonylcarbamoyl-AMP synthase (Pseudomonas fluorescens (strain ATCC BAA-477 / NRRL B-23932 / Pf-5)).